Consider the following 1028-residue polypeptide: Collagen alpha-1(VI) chain (1028 aa).

Positions 1–19 (MRAARALLPLLLQACWTAA) are cleaved as a signal peptide. The tract at residues 20–256 (QDEPETPRAV…CCSFECQPAR (237 aa)) is N-terminal globular domain. The VWFA 1 domain occupies 37 to 235 (DLFFVLDTSE…EAISQTIDTI (199 aa)). An N-linked (GlcNAc...) asparagine glycan is attached at Asn-212. The segment at 254–590 (PARGPPGLRG…GPPGHQGPPG (337 aa)) is disordered. A triple-helical region region spans residues 257 to 592 (GPPGLRGDPG…PGHQGPPGPD (336 aa)). The short motif at 262–264 (RGD) is the Cell attachment site element. 2 stretches are compositionally biased toward basic and acidic residues: residues 268–285 (EGER…EAGD) and 301–334 (KGEK…DGVK). Residues 384–394 (RPGSSGPSGDE) are compositionally biased toward low complexity. The Cell attachment site motif lies at 442–444 (RGD). Over residues 457–471 (EGPVGVPGDPGEAGP) the composition is skewed to low complexity. The short motif at 478 to 480 (RGD) is the Cell attachment site element. The span at 483–493 (PPGSEGARGAP) shows a compositional bias: low complexity. Asn-516 and Asn-537 each carry an N-linked (GlcNAc...) asparagine glycan. Acidic residues predominate over residues 550–560 (GEAGDPGDDNN). The segment covering 579–590 (PQGPPGHQGPPG) has biased composition (pro residues). The interval 593–1028 (ECEILDIIMK…QTVSRKVALG (436 aa)) is C-terminal globular domain. 2 consecutive VWFA domains span residues 615–805 (DLLF…LKNV) and 829–1021 (DITI…HQTV). N-linked (GlcNAc...) asparagine glycans are attached at residues Asn-804 and Asn-896.

The protein belongs to the type VI collagen family. As to quaternary structure, trimers composed of three different chains: alpha-1(VI), alpha-2(VI), and alpha-3(VI) or alpha-5(VI) or alpha-6(VI). Prolines at the third position of the tripeptide repeating unit (G-X-Y) are hydroxylated in some or all of the chains.

It localises to the secreted. It is found in the extracellular space. The protein resides in the extracellular matrix. Its function is as follows. Collagen VI acts as a cell-binding protein. The polypeptide is Collagen alpha-1(VI) chain (COL6A1) (Homo sapiens (Human)).